Consider the following 180-residue polypeptide: Interleukin-17B (180 aa).

A signal peptide spans 1 to 22; the sequence is MDWPHSLLFLLAISIFLAPSHP. The tract at residues 22-44 is disordered; sequence PRNTKGKRKGQGRPSPLAPGPHQ. Basic residues predominate over residues 23-32; the sequence is RNTKGKRKGQ. Asn75 carries N-linked (GlcNAc...) asparagine glycosylation. Disulfide bonds link Cys121-Cys176 and Cys126-Cys178.

It belongs to the IL-17 family.

The protein localises to the secreted. Stimulates the release of tumor necrosis factor alpha and IL-1-beta from the monocytic cell line THP-1. The chain is Interleukin-17B (Il17b) from Mus musculus (Mouse).